The chain runs to 445 residues: UDP-glucuronic acid decarboxylase 2 (445 aa).

N-acetylalanine is present on A2. At 2 to 43 (ASELINRRHETDQPTADAYYPKPIKPWFTVTRPMRYMLREQR) the chain is on the cytoplasmic side. The helical; Signal-anchor for type II membrane protein transmembrane segment at 44 to 64 (LIFVLVGIAIATLVFTIFPRS) threads the bilayer. At 65 to 445 (TQSTPYSDPF…AATTTKTTSA (381 aa)) the chain is on the lumenal side. 149–174 (DNFFTGRKENVMHHFSNPNFEMIRHD) is a binding site for NAD(+). R258 serves as a coordination point for substrate. Y261 functions as the Proton acceptor in the catalytic mechanism. 261-265 (YDEGK) provides a ligand contact to NAD(+). N290 is a binding site for substrate. Residue R302 participates in NAD(+) binding. Substrate contacts are provided by residues 303–307 (VVSNF), 320–327 (YGDGKQTR), and 387–391 (DPHKR).

It belongs to the NAD(P)-dependent epimerase/dehydratase family. UDP-glucuronic acid decarboxylase subfamily. Homodimer. Requires NAD(+) as cofactor. As to expression, ubiquitous.

The protein resides in the golgi apparatus. It is found in the golgi stack membrane. It catalyses the reaction UDP-alpha-D-glucuronate + H(+) = UDP-alpha-D-xylose + CO2. The protein operates within nucleotide-sugar biosynthesis; UDP-alpha-D-xylose biosynthesis; UDP-alpha-D-xylose from UDP-alpha-D-glucuronate: step 1/1. In terms of biological role, catalyzes the NAD-dependent decarboxylation of UDP-glucuronic acid to UDP-xylose. Necessary for the biosynthesis of the core tetrasaccharide in glycosaminoglycan biosynthesis. The sequence is that of UDP-glucuronic acid decarboxylase 2 (UXS2) from Arabidopsis thaliana (Mouse-ear cress).